The sequence spans 424 residues: Putative chloroquine resistance transporter (424 aa).

At 1–56 (MTGMKKGKNKKKNVKNDERYKELDSLISNDSEIGNNSRWGGAKRICKLIGNEMRNN) the chain is on the cytoplasmic side. Residues 57–77 (IYVYLLSILYLCVSVMNKVFS) traverse the membrane as a helical segment. At 78–88 (KRTLNKIGNYS) the chain is on the vacuolar side. Asn86 is a glycosylation site (N-linked (GlcNAc...) asparagine). A helical membrane pass occupies residues 89–109 (FVTSEVHNMICTIVFQLLYFI). At 110-125 (YRKTSNPASRNESQKN) the chain is on the cytoplasmic side. A helical membrane pass occupies residues 126 to 146 (FGWQFFLISLLDASTVIITMI). The Vacuolar portion of the chain corresponds to 147 to 156 (GLTRTTGNIQ). A helical membrane pass occupies residues 157 to 177 (SFIMQLIIPVNMYFCFIFLGY). The Cytoplasmic segment spans residues 178–180 (RYH). A helical transmembrane segment spans residues 181-201 (LFNYLGAFIILITIAAVETVL). Residues 202–209 (SYETQSDN) lie on the Vacuolar side of the membrane. Residues 210–230 (SIIFNLIMIFALIPLSFSNMT) traverse the membrane as a helical segment. The Cytoplasmic portion of the chain corresponds to 231 to 248 (REVVFKKHKINIIRLNAM). The chain crosses the membrane as a helical span at residues 249–269 (VALFQFFTSLLVLPVYNISFL). Over 270 to 317 (KEIYMPFSEMGTNINDGLRCLFYGQSTIVENCGVGMVKMCDQCEGAWK) the chain is Vacuolar. Cystine bridges form between Cys289–Cys312 and Cys301–Cys309. A helical membrane pass occupies residues 318–338 (TFITYSFFNICDNLLVCYIID). Residues 339–346 (KFSTMTYT) lie on the Cytoplasmic side of the membrane. Residues 347 to 367 (IVSCIQGPAITIAYYFKFLAG) form a helical membrane-spanning segment. Residues 368–377 (DVVRQPRLLD) are Vacuolar-facing. Residues 378-398 (FLTLFGYLLGTIIYRIGNIIL) traverse the membrane as a helical segment. Over 399-424 (EKKKMLKALNTDGSEAELTSIETSTA) the chain is Cytoplasmic.

It belongs to the CRT-like transporter family.

It localises to the vacuole membrane. Functionally, nutrient transporter. Involved in maintaining the osmotic homeostasis of the digestive vacuole. The polypeptide is Putative chloroquine resistance transporter (Plasmodium chabaudi).